The primary structure comprises 277 residues: Putative endonuclease (277 aa).

Putative endonuclease. The protein is Putative endonuclease of Escherichia coli (Enterobacteria phage T5).